An 88-amino-acid polypeptide reads, in one-letter code: Small ribosomal subunit protein uS15 (88 aa).

Belongs to the universal ribosomal protein uS15 family. As to quaternary structure, part of the 30S ribosomal subunit. Forms a bridge to the 50S subunit in the 70S ribosome, contacting the 23S rRNA.

In terms of biological role, one of the primary rRNA binding proteins, it binds directly to 16S rRNA where it helps nucleate assembly of the platform of the 30S subunit by binding and bridging several RNA helices of the 16S rRNA. Functionally, forms an intersubunit bridge (bridge B4) with the 23S rRNA of the 50S subunit in the ribosome. This Flavobacterium johnsoniae (strain ATCC 17061 / DSM 2064 / JCM 8514 / BCRC 14874 / CCUG 350202 / NBRC 14942 / NCIMB 11054 / UW101) (Cytophaga johnsonae) protein is Small ribosomal subunit protein uS15.